A 27-amino-acid chain; its full sequence is Small ribosomal subunit protein bTHX (27 aa).

Positions 1 to 13 are enriched in basic residues; that stretch reads MGKGDRRTRRGKI. The interval 1–27 is disordered; that stretch reads MGKGDRRTRRGKIWRGTYGKYRPRKKK.

This sequence belongs to the bacterial ribosomal protein bTHX family. In terms of assembly, part of the 30S ribosomal subunit.

Functionally, binds at the top of the head of the 30S subunit. It stabilizes a number of different RNA elements and thus is important for subunit structure. This Thermus aquaticus protein is Small ribosomal subunit protein bTHX (rpsU).